A 432-amino-acid chain; its full sequence is Diaminopimelate decarboxylase (432 aa).

Lysine 66 is modified (N6-(pyridoxal phosphate)lysine). Pyridoxal 5'-phosphate-binding positions include glycine 248 and 290–293 (EPGR). Substrate-binding residues include arginine 293, arginine 330, and tyrosine 334. Cysteine 361 (proton donor) is an active-site residue. Residues glutamate 362 and tyrosine 390 each coordinate substrate. A pyridoxal 5'-phosphate-binding site is contributed by tyrosine 390.

It belongs to the Orn/Lys/Arg decarboxylase class-II family. LysA subfamily. In terms of assembly, homodimer. It depends on pyridoxal 5'-phosphate as a cofactor.

It catalyses the reaction meso-2,6-diaminopimelate + H(+) = L-lysine + CO2. It functions in the pathway amino-acid biosynthesis; L-lysine biosynthesis via DAP pathway; L-lysine from DL-2,6-diaminopimelate: step 1/1. In terms of biological role, specifically catalyzes the decarboxylation of meso-diaminopimelate (meso-DAP) to L-lysine. This Bacillus methanolicus protein is Diaminopimelate decarboxylase.